Reading from the N-terminus, the 1220-residue chain is DNA polymerase catalytic subunit (1220 aa).

Disordered stretches follow at residues 21–43 (GKRP…RPPQ) and 641–691 (QADA…KPGV). A compositionally biased stretch (polar residues) spans 646–660 (SETSELAMDSQSHAF).

This sequence belongs to the DNA polymerase type-B family. In terms of assembly, forms a complex with the ssDNA-binding protein, the DNA polymerase processivity factor, and the alkaline exonuclease. Interacts with the helicase-primase complex composed of the primase, the helicase and the primase-associated factor; this interaction may coordinate leading and lagging strand DNA synthesis at the replication fork.

The protein localises to the host nucleus. It carries out the reaction DNA(n) + a 2'-deoxyribonucleoside 5'-triphosphate = DNA(n+1) + diphosphate. The catalysed reaction is Endonucleolytic cleavage to 5'-phosphomonoester.. Its function is as follows. Replicates viral genomic DNA. The replication complex is composed of six viral proteins: the DNA polymerase, processivity factor, primase, primase-associated factor, helicase, and ssDNA-binding protein. Additionally, the polymerase contains an intrinsic ribonuclease H (RNase H) activity that specifically degrades RNA/DNA heteroduplexes or duplex DNA substrates in the 5' to 3' direction. Therefore, it can catalyze the excision of the RNA primers that initiate the synthesis of Okazaki fragments at a replication fork during viral DNA replication. The chain is DNA polymerase catalytic subunit from Equus caballus (Horse).